We begin with the raw amino-acid sequence, 149 residues long: Protein-export protein SecB 2 (149 aa).

The protein belongs to the SecB family. In terms of assembly, homotetramer, a dimer of dimers. One homotetramer interacts with 1 SecA dimer.

It is found in the cytoplasm. Functionally, one of the proteins required for the normal export of preproteins out of the cell cytoplasm. It is a molecular chaperone that binds to a subset of precursor proteins, maintaining them in a translocation-competent state. It also specifically binds to its receptor SecA. The polypeptide is Protein-export protein SecB 2 (Francisella tularensis subsp. tularensis (strain FSC 198)).